The sequence spans 172 residues: 3-hydroxydecanoyl-[acyl-carrier-protein] dehydratase (172 aa).

Histidine 71 is a catalytic residue.

Belongs to the thioester dehydratase family. FabA subfamily. Homodimer.

Its subcellular location is the cytoplasm. It carries out the reaction a (3R)-hydroxyacyl-[ACP] = a (2E)-enoyl-[ACP] + H2O. The enzyme catalyses (3R)-hydroxydecanoyl-[ACP] = (2E)-decenoyl-[ACP] + H2O. It catalyses the reaction (2E)-decenoyl-[ACP] = (3Z)-decenoyl-[ACP]. It participates in lipid metabolism; fatty acid biosynthesis. Functionally, necessary for the introduction of cis unsaturation into fatty acids. Catalyzes the dehydration of (3R)-3-hydroxydecanoyl-ACP to E-(2)-decenoyl-ACP and then its isomerization to Z-(3)-decenoyl-ACP. Can catalyze the dehydratase reaction for beta-hydroxyacyl-ACPs with saturated chain lengths up to 16:0, being most active on intermediate chain length. In Yersinia enterocolitica serotype O:8 / biotype 1B (strain NCTC 13174 / 8081), this protein is 3-hydroxydecanoyl-[acyl-carrier-protein] dehydratase.